The primary structure comprises 546 residues: MPLSLLLTCLSTTVTLVSPAVLDPCSAYISLNEPWRNTDHQFDESQNQPLCDNHMNGEWYRFTGMAGDAMPTFCIPENHCGTHAPVWLNGSHPLEEDGIVQRQACASFKGNCCLWNATVEVKACPRGYYVYRLARPSVCFHVYCGHFYDICDEDCHGNCLDTTECACSPGTSLGPDGQTCFDENECEHNNGGCSEICVNLKNSHRCACGVGRVLRSDGKTCEDIEGCHNNNGGCSHSCLGSEEGYQCECPRGLVLSEDNHTCQVPVLCKSSAIEVSVPRELVGGLELFLTNTSCRGVSNGTHVNIVFSLKTCGTVVDVVNDKIVASNIVTGLPKETPGSSGDIIIRTSKLLIPVTCEFPRLYTISEGYVPNLRNAPLEIRSRNHGIFPFTLEIFKDHEFEEPYRETLPTLKLRDSLYFGIEPLVHVNGLESLVESCFATPTAKMDEILKYYLIQDGCVSDDSVKQYSSRDHLAKHFQAPVFKFVGKDHKEVFLHCRVLVCGVLDERSRCAQGCHRRVRREVGEDEDSAGLQSQTLTGGPIAIDWED.

A signal peptide spans 1–19 (MPLSLLLTCLSTTVTLVSP). Asparagine 89 and asparagine 116 each carry an N-linked (GlcNAc...) asparagine glycan. The 41-residue stretch at 182 to 222 (DENECEHNNGGCSEICVNLKNSHRCACGVGRVLRSDGKTCE) folds into the EGF-like; calcium-binding domain. Disulfide bonds link cysteine 186–cysteine 197, cysteine 193–cysteine 206, and cysteine 208–cysteine 221. Residues 261-516 (TCQVPVLCKS…SRCAQGCHRR (256 aa)) enclose the ZP domain. N-linked (GlcNAc...) asparagine glycosylation occurs at asparagine 299.

In terms of tissue distribution, liver-specific. Expressed only in the hepatocytes.

It is found in the nucleus envelope. May be involved in hepatocellular function and development. The chain is Oncoprotein-induced transcript 3 protein (Oit3) from Mus musculus (Mouse).